The sequence spans 679 residues: Transketolase (679 aa).

Histidine 30 serves as a coordination point for substrate. Thiamine diphosphate-binding positions include histidine 69 and 116–118 (GPL). Aspartate 157 serves as a coordination point for Mg(2+). The thiamine diphosphate site is built by glycine 158 and asparagine 187. Mg(2+)-binding residues include asparagine 187 and isoleucine 189. Residues histidine 262, arginine 358, and serine 385 each coordinate substrate. Histidine 262 contributes to the thiamine diphosphate binding site. 2 residues coordinate thiamine diphosphate: glutamate 417 and phenylalanine 444. The active-site Proton donor is glutamate 417. Positions 468, 476, and 527 each coordinate substrate.

This sequence belongs to the transketolase family. Homodimer. Mg(2+) is required as a cofactor. It depends on Ca(2+) as a cofactor. Mn(2+) serves as cofactor. The cofactor is Co(2+). Requires thiamine diphosphate as cofactor.

The enzyme catalyses D-sedoheptulose 7-phosphate + D-glyceraldehyde 3-phosphate = aldehydo-D-ribose 5-phosphate + D-xylulose 5-phosphate. Functionally, catalyzes the transfer of a two-carbon ketol group from a ketose donor to an aldose acceptor, via a covalent intermediate with the cofactor thiamine pyrophosphate. This is Transketolase (TKL1) from Kluyveromyces lactis (strain ATCC 8585 / CBS 2359 / DSM 70799 / NBRC 1267 / NRRL Y-1140 / WM37) (Yeast).